The chain runs to 201 residues: Potassium-transporting ATPase KdpC subunit (201 aa).

The chain crosses the membrane as a helical span at residues 13-33; sequence IIFMIFTILCGGIYTIFITGI.

The protein belongs to the KdpC family. As to quaternary structure, the system is composed of three essential subunits: KdpA, KdpB and KdpC.

The protein localises to the cell membrane. In terms of biological role, part of the high-affinity ATP-driven potassium transport (or Kdp) system, which catalyzes the hydrolysis of ATP coupled with the electrogenic transport of potassium into the cytoplasm. This subunit acts as a catalytic chaperone that increases the ATP-binding affinity of the ATP-hydrolyzing subunit KdpB by the formation of a transient KdpB/KdpC/ATP ternary complex. The sequence is that of Potassium-transporting ATPase KdpC subunit from Clostridium botulinum (strain Eklund 17B / Type B).